Consider the following 453-residue polypeptide: Serine/threonine-protein phosphatase 2A regulatory subunit B'' subunit gamma (453 aa).

Residues 1–27 form a disordered region; sequence MDWKDVLRRRLASPNSDPKRKKSEQEL. EF-hand domains lie at 273-308 and 341-376; these read PSAL…TMTN and KEPA…IQEL. 5 residues coordinate Ca(2+): D286, D288, N290, M292, and E297.

Interacts with MCM3AP/GANP, PPP5C, and the phosphatase 2A core enzyme composed of the PPP2CA catalytic subunit and the constant regulatory subunit PPP2R1A. Finds in a complex with ABCB1, TFPI2 and PPP2R3C; leading to the dephosphorylation of ABCB1.

Its subcellular location is the nucleus. It is found in the cytoplasm. May regulate MCM3AP phosphorylation through phosphatase recruitment. May act as a negative regulator of ABCB1 expression and function through the dephosphorylation of ABCB1 by TFPI2/PPP2R3C complex. May play a role in the activation-induced cell death of B-cells. In Rattus norvegicus (Rat), this protein is Serine/threonine-protein phosphatase 2A regulatory subunit B'' subunit gamma (Ppp2r3c).